Consider the following 165-residue polypeptide: Putative pre-16S rRNA nuclease (165 aa).

Belongs to the YqgF nuclease family.

It localises to the cytoplasm. Could be a nuclease involved in processing of the 5'-end of pre-16S rRNA. In Sinorhizobium medicae (strain WSM419) (Ensifer medicae), this protein is Putative pre-16S rRNA nuclease.